The primary structure comprises 78 residues: DNA-directed RNA polymerase subunit Rpo5 (78 aa).

The protein belongs to the archaeal Rpo5/eukaryotic RPB5 RNA polymerase subunit family. In terms of assembly, part of the RNA polymerase complex.

Its subcellular location is the cytoplasm. The catalysed reaction is RNA(n) + a ribonucleoside 5'-triphosphate = RNA(n+1) + diphosphate. In terms of biological role, DNA-dependent RNA polymerase (RNAP) catalyzes the transcription of DNA into RNA using the four ribonucleoside triphosphates as substrates. This chain is DNA-directed RNA polymerase subunit Rpo5, found in Methanosarcina mazei (strain ATCC BAA-159 / DSM 3647 / Goe1 / Go1 / JCM 11833 / OCM 88) (Methanosarcina frisia).